Consider the following 1547-residue polypeptide: Mediator of RNA polymerase II transcription subunit 12 (1547 aa).

Disordered regions lie at residues 1 to 63 (MTSR…RPHI) and 1356 to 1509 (PVIP…QQRD). Positions 1357–1369 (VIPPLEPPQPPNP) are enriched in pro residues. Residues 1379–1390 (YQSPQMTSNTAA) are compositionally biased toward polar residues. 2 stretches are compositionally biased toward low complexity: residues 1398–1413 (QQQQ…QQTQ) and 1446–1468 (LSPL…RASQ). 2 stretches are compositionally biased toward polar residues: residues 1469 to 1480 (PSPIHSQRPTSV) and 1499 to 1509 (AHTSYVNQQRD).

Belongs to the Mediator complex subunit 12 family. In terms of assembly, component of the SRB8-11 complex, which itself associates with the Mediator complex.

It is found in the nucleus. Its function is as follows. Component of the SRB8-11 complex. The SRB8-11 complex is a regulatory module of the Mediator complex which is itself involved in regulation of basal and activated RNA polymerase II-dependent transcription. The SRB8-11 complex may be involved in the transcriptional repression of a subset of genes regulated by Mediator. It may inhibit the association of the Mediator complex with RNA polymerase II to form the holoenzyme complex. In Phaeosphaeria nodorum (strain SN15 / ATCC MYA-4574 / FGSC 10173) (Glume blotch fungus), this protein is Mediator of RNA polymerase II transcription subunit 12 (SRB8).